Consider the following 430-residue polypeptide: Adenylosuccinate synthetase (430 aa).

Residues 13 to 19 (GDEGKGK) and 41 to 43 (GHT) contribute to the GTP site. Residue D14 is the Proton acceptor of the active site. Positions 14 and 41 each coordinate Mg(2+). IMP-binding positions include 14-17 (DEGK), 39-42 (NAGH), T130, R144, Q225, T240, and R304. H42 acts as the Proton donor in catalysis. Substrate is bound at residue 300-306 (ATTGRAR). GTP-binding positions include R306, 332-334 (KLD), and 414-416 (STG).

The protein belongs to the adenylosuccinate synthetase family. As to quaternary structure, homodimer. Mg(2+) serves as cofactor.

Its subcellular location is the cytoplasm. It catalyses the reaction IMP + L-aspartate + GTP = N(6)-(1,2-dicarboxyethyl)-AMP + GDP + phosphate + 2 H(+). Its pathway is purine metabolism; AMP biosynthesis via de novo pathway; AMP from IMP: step 1/2. Functionally, plays an important role in the de novo pathway of purine nucleotide biosynthesis. Catalyzes the first committed step in the biosynthesis of AMP from IMP. This is Adenylosuccinate synthetase from Pseudomonas fluorescens (strain ATCC BAA-477 / NRRL B-23932 / Pf-5).